The sequence spans 132 residues: Small ribosomal subunit protein uS11 (132 aa).

Positions 110–132 are disordered; that stretch reads IEDVTPVPSDSTRRKGGRRGRRL. Residues 123–132 show a composition bias toward basic residues; sequence RKGGRRGRRL.

This sequence belongs to the universal ribosomal protein uS11 family. Component of the small ribosomal subunit. Mature ribosomes consist of a small (40S) and a large (60S) subunit. The 40S subunit contains about 32 different proteins and 1 molecule of RNA (18S). The 60S subunit contains 45 different proteins and 3 molecules of RNA (25S, 5.8S and 5S).

It is found in the cytoplasm. Its function is as follows. Component of the ribosome, a large ribonucleoprotein complex responsible for the synthesis of proteins in the cell. The small ribosomal subunit (SSU) binds messenger RNAs (mRNAs) and translates the encoded message by selecting cognate aminoacyl-transfer RNA (tRNA) molecules. The large subunit (LSU) contains the ribosomal catalytic site termed the peptidyl transferase center (PTC), which catalyzes the formation of peptide bonds, thereby polymerizing the amino acids delivered by tRNAs into a polypeptide chain. The nascent polypeptides leave the ribosome through a tunnel in the LSU and interact with protein factors that function in enzymatic processing, targeting, and the membrane insertion of nascent chains at the exit of the ribosomal tunnel. RPS14B is involved in nucleolar processing of pre-18S ribosomal RNA and ribosome assembly. This chain is Small ribosomal subunit protein uS11 (RPS14B), found in Candida albicans (strain SC5314 / ATCC MYA-2876) (Yeast).